The primary structure comprises 601 residues: Protein FAM13C (601 aa).

Disordered regions lie at residues serine 82–serine 134 and aspartate 192–glutamine 238. The segment covering glutamate 98–histidine 111 has biased composition (basic and acidic residues). Serine 130 carries the phosphoserine modification. Over residues aspartate 200–alanine 217 the composition is skewed to low complexity. Serine 258 is modified (phosphoserine). 3 disordered regions span residues glutamine 268 to glutamine 304, phenylalanine 327 to aspartate 352, and lysine 366 to serine 485. Residues serine 282 to arginine 294 show a composition bias toward low complexity. Over residues phenylalanine 327–serine 342 the composition is skewed to basic and acidic residues. Serine 405 and serine 406 each carry phosphoserine. Over residues valine 415–arginine 446 the composition is skewed to basic and acidic residues. A compositionally biased stretch (acidic residues) spans glutamine 462–cysteine 471.

The protein belongs to the FAM13 family.

This Mus musculus (Mouse) protein is Protein FAM13C (Fam13c).